The chain runs to 544 residues: Putative lipase ATG15 (544 aa).

Residues 1–45 (MVADFDSGWYEGAGDELGQGARNGVLRERLGGNEKAQVVRSRRKA) are Cytoplasmic-facing. Residues 46 to 66 (VAWNVLMVLGLILYVLYSACF) form a helical; Signal-anchor for type II membrane protein membrane-spanning segment. Over 67-544 (AQARQWWRTN…NWFGYCTEYA (478 aa)) the chain is Lumenal. 3 N-linked (GlcNAc...) asparagine glycosylation sites follow: Asn-200, Asn-229, and Asn-234. Ser-362 (charge relay system) is an active-site residue. Residues 508–530 (PMPSSVASKPTPTPTSPGSPSST) are disordered.

It belongs to the AB hydrolase superfamily. Lipase family. In terms of assembly, binds to both phosphatidylinositol (PI) and phosphatidylinositol 3,5-bisphosphate (PIP2).

It is found in the endosome. It localises to the multivesicular body membrane. Its subcellular location is the prevacuolar compartment membrane. It catalyses the reaction a triacylglycerol + H2O = a diacylglycerol + a fatty acid + H(+). Lipase which is essential for lysis of subvacuolar cytoplasm to vacuole targeted bodies and intravacuolar autophagic bodies. Involved in the lysis of intravacuolar multivesicular body (MVB) vesicles. The intravacuolar membrane disintegration by ATG15 is critical to life span extension. This chain is Putative lipase ATG15 (ATG15), found in Eremothecium gossypii (strain ATCC 10895 / CBS 109.51 / FGSC 9923 / NRRL Y-1056) (Yeast).